The chain runs to 283 residues: Thymidylate synthase (283 aa).

Arg-22 provides a ligand contact to dUMP. Cys-160 serves as the catalytic Nucleophile. DUMP contacts are provided by residues 180 to 183, Asn-191, and 221 to 223; these read RSCD and HIY. Residue Asp-183 coordinates (6R)-5,10-methylene-5,6,7,8-tetrahydrofolate. Ser-282 is a binding site for (6R)-5,10-methylene-5,6,7,8-tetrahydrofolate.

The protein belongs to the thymidylate synthase family. Bacterial-type ThyA subfamily. As to quaternary structure, homodimer.

The protein resides in the cytoplasm. It catalyses the reaction dUMP + (6R)-5,10-methylene-5,6,7,8-tetrahydrofolate = 7,8-dihydrofolate + dTMP. The protein operates within pyrimidine metabolism; dTTP biosynthesis. Catalyzes the reductive methylation of 2'-deoxyuridine-5'-monophosphate (dUMP) to 2'-deoxythymidine-5'-monophosphate (dTMP) while utilizing 5,10-methylenetetrahydrofolate (mTHF) as the methyl donor and reductant in the reaction, yielding dihydrofolate (DHF) as a by-product. This enzymatic reaction provides an intracellular de novo source of dTMP, an essential precursor for DNA biosynthesis. The protein is Thymidylate synthase of Shewanella halifaxensis (strain HAW-EB4).